The following is a 210-amino-acid chain: Guanylate kinase (210 aa).

In terms of domain architecture, Guanylate kinase-like spans 5–183 (GILFVISAPS…AVEEFKSIIL (179 aa)). 12–19 (APSGAGKT) lines the ATP pocket.

Belongs to the guanylate kinase family.

The protein resides in the cytoplasm. It carries out the reaction GMP + ATP = GDP + ADP. Functionally, essential for recycling GMP and indirectly, cGMP. This chain is Guanylate kinase, found in Syntrophotalea carbinolica (strain DSM 2380 / NBRC 103641 / GraBd1) (Pelobacter carbinolicus).